Here is a 232-residue protein sequence, read N- to C-terminus: uncharacterized protein (232 aa).

Residues 1–71 (MSNPTIEGDE…KENERIKNDD (71 aa)) form a disordered region. Acidic residues predominate over residues 25-38 (DDLDDLDDILDDLD). Basic and acidic residues predominate over residues 44-71 (KNEEKKNIDEHKQTGNTSKENERIKNDD).

This is an uncharacterized protein from Schizosaccharomyces pombe (strain 972 / ATCC 24843) (Fission yeast).